The following is a 127-amino-acid chain: Fumarate reductase subunit C (127 aa).

The next 3 membrane-spanning stretches (helical) occupy residues 30–50 (ATVLPLILFTLFLTVGLGSLV), 67–87 (LVIAINLVALAGSLFHAQTFF), and 107–127 (IIVLAQWAAVAFISLIVLIVV).

The protein belongs to the FrdC family. As to quaternary structure, part of an enzyme complex containing four subunits: a flavoprotein (FrdA), an iron-sulfur protein (FrdB), and two hydrophobic anchor proteins (FrdC and FrdD).

The protein localises to the cell inner membrane. Its function is as follows. Anchors the catalytic components of the fumarate reductase complex to the cell membrane, binds quinones. The sequence is that of Fumarate reductase subunit C from Vibrio cholerae serotype O1 (strain ATCC 39541 / Classical Ogawa 395 / O395).